A 1374-amino-acid chain; its full sequence is DNA-directed RNA polymerase subunit beta (1374 aa).

It belongs to the RNA polymerase beta chain family. The RNAP catalytic core consists of 2 alpha, 1 beta, 1 beta' and 1 omega subunit. When a sigma factor is associated with the core the holoenzyme is formed, which can initiate transcription.

It catalyses the reaction RNA(n) + a ribonucleoside 5'-triphosphate = RNA(n+1) + diphosphate. In terms of biological role, DNA-dependent RNA polymerase catalyzes the transcription of DNA into RNA using the four ribonucleoside triphosphates as substrates. This chain is DNA-directed RNA polymerase subunit beta, found in Methylobacterium nodulans (strain LMG 21967 / CNCM I-2342 / ORS 2060).